The sequence spans 210 residues: 3-demethoxyubiquinol 3-hydroxylase (210 aa).

Fe cation is bound by residues Glu59, Glu89, His92, Glu141, Glu173, and His176.

It belongs to the COQ7 family. Requires Fe cation as cofactor.

The protein localises to the cell membrane. The catalysed reaction is a 5-methoxy-2-methyl-3-(all-trans-polyprenyl)benzene-1,4-diol + AH2 + O2 = a 3-demethylubiquinol + A + H2O. It participates in cofactor biosynthesis; ubiquinone biosynthesis. In terms of biological role, catalyzes the hydroxylation of 2-nonaprenyl-3-methyl-6-methoxy-1,4-benzoquinol during ubiquinone biosynthesis. The chain is 3-demethoxyubiquinol 3-hydroxylase from Albidiferax ferrireducens (strain ATCC BAA-621 / DSM 15236 / T118) (Rhodoferax ferrireducens).